The following is a 236-amino-acid chain: Adenosine 5'-phosphosulfate reductase 2 (236 aa).

The [4Fe-4S] cluster site is built by Cys-122, Cys-123, Cys-205, and Cys-208. Residues 216-236 (NDERAGRWAGREKTECGLHQE) form a disordered region. Residue Cys-231 is the Nucleophile; cysteine thiosulfonate intermediate of the active site.

This sequence belongs to the PAPS reductase family. CysH subfamily. The cofactor is [4Fe-4S] cluster.

It localises to the cytoplasm. The enzyme catalyses [thioredoxin]-disulfide + sulfite + AMP + 2 H(+) = adenosine 5'-phosphosulfate + [thioredoxin]-dithiol. It participates in sulfur metabolism; hydrogen sulfide biosynthesis; sulfite from sulfate. In terms of biological role, catalyzes the formation of sulfite from adenosine 5'-phosphosulfate (APS) using thioredoxin as an electron donor. The protein is Adenosine 5'-phosphosulfate reductase 2 of Bacillus subtilis (strain 168).